Here is a 539-residue protein sequence, read N- to C-terminus: Putative cysteine ligase BshC (539 aa).

A coiled-coil region spans residues L455–K475.

The protein belongs to the BshC family.

In terms of biological role, involved in bacillithiol (BSH) biosynthesis. May catalyze the last step of the pathway, the addition of cysteine to glucosamine malate (GlcN-Mal) to generate BSH. The protein is Putative cysteine ligase BshC of Bacillus velezensis (strain DSM 23117 / BGSC 10A6 / LMG 26770 / FZB42) (Bacillus amyloliquefaciens subsp. plantarum).